Consider the following 185-residue polypeptide: Ribosome-recycling factor (185 aa).

This sequence belongs to the RRF family.

It is found in the cytoplasm. In terms of biological role, responsible for the release of ribosomes from messenger RNA at the termination of protein biosynthesis. May increase the efficiency of translation by recycling ribosomes from one round of translation to another. This chain is Ribosome-recycling factor, found in Clostridium beijerinckii (strain ATCC 51743 / NCIMB 8052) (Clostridium acetobutylicum).